We begin with the raw amino-acid sequence, 382 residues long: Galactokinase (382 aa).

Position 34–37 (34–37 (EHTD)) interacts with substrate. 124 to 130 (GAGLSSS) serves as a coordination point for ATP. The Mg(2+) site is built by Ser-130 and Glu-162. The active-site Proton acceptor is Asp-174. Tyr-223 serves as a coordination point for substrate.

This sequence belongs to the GHMP kinase family. GalK subfamily.

Its subcellular location is the cytoplasm. It carries out the reaction alpha-D-galactose + ATP = alpha-D-galactose 1-phosphate + ADP + H(+). It participates in carbohydrate metabolism; galactose metabolism. Its function is as follows. Catalyzes the transfer of the gamma-phosphate of ATP to D-galactose to form alpha-D-galactose-1-phosphate (Gal-1-P). This chain is Galactokinase, found in Citrobacter koseri (strain ATCC BAA-895 / CDC 4225-83 / SGSC4696).